The chain runs to 732 residues: Polyadenylate-binding protein, cytoplasmic and nuclear (732 aa).

Positions 1-19 (MSAETSTTPAPAENTNGTP) are enriched in polar residues. The segment at 1–26 (MSAETSTTPAPAENTNGTPDNAPAPE) is disordered. 4 consecutive RRM domains span residues 42-120 (ASLY…WSQR), 130-207 (GNVF…HHIS), 223-300 (TNIY…RAQK), and 326-454 (VNLY…LAQR). Disordered regions lie at residues 357–413 (VMRD…KKPL) and 706–732 (MKNK…ENKA). Residues 371-412 (SETKESANKENEKAAEGEKEPAAEEKEKEEKKEAEQKPEKKP) show a composition bias toward basic and acidic residues. The region spanning 630 to 707 (VGVLTAQALS…ALSVYDEYMK (78 aa)) is the PABC domain.

This sequence belongs to the polyadenylate-binding protein type-1 family.

It localises to the cytoplasm. Its subcellular location is the nucleus. In terms of biological role, binds the poly(A) tail of mRNA. Appears to be an important mediator of the multiple roles of the poly(A) tail in mRNA biogenesis, stability and translation. In the nucleus, involved in both mRNA cleavage and polyadenylation. Is also required for efficient mRNA export to the cytoplasm. Acts in concert with a poly(A)-specific nuclease (PAN) to affect poly(A) tail shortening, which may occur concomitantly with either nucleocytoplasmic mRNA transport or translational initiation. In the cytoplasm, stimulates translation initiation and regulates mRNA decay through translation termination-coupled poly(A) shortening, probably mediated by PAN. The chain is Polyadenylate-binding protein, cytoplasmic and nuclear (pab1) from Emericella nidulans (strain FGSC A4 / ATCC 38163 / CBS 112.46 / NRRL 194 / M139) (Aspergillus nidulans).